The sequence spans 327 residues: GMP reductase (327 aa).

Catalysis depends on cysteine 176, which acts as the Thioimidate intermediate. Isoleucine 205–valine 228 is a binding site for NADP(+).

The protein belongs to the IMPDH/GMPR family. GuaC type 2 subfamily.

It catalyses the reaction IMP + NH4(+) + NADP(+) = GMP + NADPH + 2 H(+). Its function is as follows. Catalyzes the irreversible NADPH-dependent deamination of GMP to IMP. It functions in the conversion of nucleobase, nucleoside and nucleotide derivatives of G to A nucleotides, and in maintaining the intracellular balance of A and G nucleotides. This is GMP reductase from Helicobacter pylori (strain ATCC 700392 / 26695) (Campylobacter pylori).